Reading from the N-terminus, the 163-residue chain is Lysosomal enzyme trafficking factor (163 aa).

2 consecutive transmembrane segments (helical) span residues 40 to 60 (MGWI…YYVF) and 98 to 118 (LPFW…FLFL).

Belongs to the LYSET family. In terms of assembly, interacts with GNPTAB; this interaction is important for proper localization of GNPTAB in Golgi stacks. Interacts with MBTPS1.

It localises to the golgi apparatus membrane. Functionally, required for mannose-6-phosphate-dependent trafficking of lysosomal enzymes. LYSET bridges GlcNAc-1-phosphate transferase (GNPTAB), to the membrane-bound transcription factor site-1 protease (MBTPS1), thus allowing proteolytic activation of the GNPTAB. GNPTAB is involved in the regulation of M6P-dependent Golgi-to-lysosome trafficking of lysosomal enzymes. LYSET is thus an essential factor for maturation and delivery of lysosomal hydrolases. This chain is Lysosomal enzyme trafficking factor (LYSET), found in Bos taurus (Bovine).